The chain runs to 507 residues: Tryptamine 4-monooxygenase (507 aa).

An N-terminal signal peptide occupies residues M1–A19. The interval P403–R425 is disordered. Basic and acidic residues predominate over residues F408–R425. C439 is a heme binding site.

This sequence belongs to the cytochrome P450 family. The cofactor is heme.

The catalysed reaction is tryptamine + AH2 + O2 = 4-hydroxytryptamine + A + H2O. It functions in the pathway secondary metabolite biosynthesis. Functionally, tryptamine 4-monooxygenase; part of the gene cluster that mediates the biosynthesis of psilocybin, a psychotropic tryptamine-derived natural product. The first step in the pathway is the decarboxylation of L-tryptophan to tryptamine by the decarboxylase psiD. PsiD does not decarboxylate phenylalanine, tyrosine, or 5-hydroxy- L -tryptophan (5-HTP). 4-hydroxy-L-tryptophan is accepted as substrate by psiD as well. The cytochrome P450 monooxygenase psiH then converts tryptamine to 4-hydroxytryptamine. The kinase psiK catalyzes the 4-O-phosphorylation step by converting 4-hydroxytryptamine into norbaeocystin. The methyltransferase psiM then catalyzes iterative methyl transfer to the amino group of norbaeocystin to yield psilocybin via a monomethylated intermediate, baeocystin. This is Tryptamine 4-monooxygenase from Psilocybe cyanescens.